Reading from the N-terminus, the 199-residue chain is Putative HMP/thiamine permease protein YkoE (199 aa).

6 helical membrane-spanning segments follow: residues 9 to 29, 40 to 60, 63 to 83, 85 to 105, 114 to 134, and 143 to 163; these read IVIM…FTHF, IAYE…AYMI, PGAA…LGNP, GPMV…VFLA, PVLM…DLFV, and GYLL…AGLL.

In terms of assembly, the complex is composed of two ATP-binding proteins (YkoD), two transmembrane proteins (YkoC and YkoE) and a solute-binding protein (YkoF).

It is found in the cell membrane. In terms of biological role, part of the ABC transporter complex YkoCDEF that could transport hydroxymethylpyrimidine (HMP) and/or thiamine. Could also transport other HMP-containing products. Probably responsible for the translocation of the substrate across the membrane. The protein is Putative HMP/thiamine permease protein YkoE (ykoE) of Bacillus subtilis (strain 168).